The following is a 187-amino-acid chain: Pyridoxal 5'-phosphate synthase subunit PdxT (187 aa).

An L-glutamine-binding site is contributed by 47–49 (GES). Cys-76 functions as the Nucleophile in the catalytic mechanism. L-glutamine is bound by residues Arg-102 and 128–129 (IR). Catalysis depends on charge relay system residues His-165 and Glu-167.

It belongs to the glutaminase PdxT/SNO family. As to quaternary structure, in the presence of PdxS, forms a dodecamer of heterodimers. Only shows activity in the heterodimer.

The catalysed reaction is aldehydo-D-ribose 5-phosphate + D-glyceraldehyde 3-phosphate + L-glutamine = pyridoxal 5'-phosphate + L-glutamate + phosphate + 3 H2O + H(+). It catalyses the reaction L-glutamine + H2O = L-glutamate + NH4(+). It participates in cofactor biosynthesis; pyridoxal 5'-phosphate biosynthesis. Functionally, catalyzes the hydrolysis of glutamine to glutamate and ammonia as part of the biosynthesis of pyridoxal 5'-phosphate. The resulting ammonia molecule is channeled to the active site of PdxS. The sequence is that of Pyridoxal 5'-phosphate synthase subunit PdxT from Methanococcus vannielii (strain ATCC 35089 / DSM 1224 / JCM 13029 / OCM 148 / SB).